The sequence spans 395 residues: MAAASGYTDLREKLKSMTSRDNYKAGSREAAAAAAAAVAAAAAAAAAAEPYPVSGTTKRKYQEDSDPERSDYEEHQLQKEEEARKVKSGIRQIRLFSQDECSKIEARIDEVVSRAEKGLYNEHTVDRAPLRNKYFFGEGYTYGAQLQKRGPGQERLYPPGDVDEIPEWVHQLVIQKLVEHRVIPEGFVNSAVINDYQPGGCIVSHVDPIHIFERPIVSVSFFSDSALCFGCKFQFKPIRVSEPVLSLPVRRGSVTVLSGYAADEITHCIRPQDIKERRAVIILRKTRLDAPRLETKSLSSSTLPPSYASDRLSGNTRDPALKPKRSHRKADPDAAHRPRILEMDKEENRRSVLLPTHRRRGSFSSENYWRKSYESSEDCPEAASSPTRKVKMRRH.

Disordered regions lie at residues 1 to 28 (MAAA…AGSR) and 47 to 83 (AAEP…EEEA). An N-acetylalanine modification is found at alanine 2. Lysine 58 participates in a covalent cross-link: Glycyl lysine isopeptide (Lys-Gly) (interchain with G-Cter in ubiquitin). A compositionally biased stretch (basic and acidic residues) spans 60–83 (KYQEDSDPERSDYEEHQLQKEEEA). Phosphoserine is present on residues serine 65 and serine 70. Residues 68–117 (ERSDYEEHQLQKEEEARKVKSGIRQIRLFSQDECSKIEARIDEVVSRAEK) are a coiled coil. A Phosphotyrosine modification is found at tyrosine 72. Lysine 87 participates in a covalent cross-link: Glycyl lysine isopeptide (Lys-Gly) (interchain with G-Cter in SUMO1). Serine 88 is modified (phosphoserine). An N6-acetyllysine modification is found at lysine 133. Tyrosine 140 is an active-site residue. 3 residues coordinate 2-oxoglutarate: asparagine 194, tyrosine 196, and histidine 205. A disulfide bridge links cysteine 231 with cysteine 268. Lysine 236 is subject to N6-acetyllysine. Histidine 267 and arginine 278 together coordinate 2-oxoglutarate. The segment at 294–395 (ETKSLSSSTL…PTRKVKMRRH (102 aa)) is disordered. Low complexity predominate over residues 296-306 (KSLSSSTLPPS). Residue lysine 322 forms a Glycyl lysine isopeptide (Lys-Gly) (interchain with G-Cter in SUMO1) linkage. The residue at position 326 (serine 326) is a Phosphoserine. Lysine 329 is covalently cross-linked (Glycyl lysine isopeptide (Lys-Gly) (interchain with G-Cter in SUMO2)). Residues 329–350 (KADPDAAHRPRILEMDKEENRR) are compositionally biased toward basic and acidic residues. Arginine 360 bears the Omega-N-methylarginine mark. Phosphoserine occurs at positions 362, 372, 375, and 385.

Belongs to the alkB family. As to quaternary structure, monomer. Interacts with RBM33; promoting desumoylation by SENP1 and recruitment to N(6)-methyladenosine-containing mRNAs. Interacts (when acetylated by KAT8) with PSPC1; interaction facilitates recognition of N(6)-methyladenosine (m6A) mRNA. It depends on Fe(2+) as a cofactor. Phosphorylated at Ser-88 and Ser-326 in response to reactive oxygen species (ROS), promoting sumoylation and inactivation. Post-translationally, acetylated by KAT8 at Lys-236, promoting interaction with PSPC1, thereby facilitating recognition of N(6)-methyladenosine (m6A) mRNA by ALKBH5. Deacetylated at Lys-236 by HDAC7. In terms of processing, sumoylated at Lys-87 and Lys-322 by PIAS4 following phosphorylation at Ser-88 and Ser-326 in response to reactive oxygen species (ROS), inhibiting the RNA demethylase activity. Desumoylated by SENP1; relieving RNA demethylase inhibition, leading to N(6)-methyladenosine-containing mRNAs demethylation. Ubiquitinated at Lys-58 via 'Lys-48'-linked polyubiquitin chain, leading to its degradation by the proteasome. Deubiquitinated at Lys-58 by USP9X, promoting its stabilizazion.

The protein localises to the nucleus speckle. It catalyses the reaction an N(6)-methyladenosine in mRNA + 2-oxoglutarate + O2 = an adenosine in mRNA + formaldehyde + succinate + CO2. RNA demethylase activity is inhibited following sumoylation. Inhibition is relieved following desumoylation. Functionally, dioxygenase that specifically demethylates N(6)-methyladenosine (m6A) RNA, the most prevalent internal modification of messenger RNA (mRNA) in higher eukaryotes. Demethylates RNA by oxidative demethylation, which requires molecular oxygen, alpha-ketoglutarate and iron. Demethylation of m6A mRNA affects mRNA processing, translation and export. Can also demethylate N(6)-methyladenosine in single-stranded DNA (in vitro). Required for the late meiotic and haploid phases of spermatogenesis by mediating m6A demethylation in spermatocytes and round spermatids: m6A demethylation of target transcripts is required for correct splicing and the production of longer 3'-UTR mRNAs in male germ cells. Involved in paraspeckle assembly, a nuclear membraneless organelle, by undergoing liquid-liquid phase separation. Paraspeckle assembly is coupled with m6A demethylation of RNAs, such as NEAT1 non-coding RNA. Also acts as a negative regulator of T-cell development: inhibits gamma-delta T-cell proliferation via demethylation of JAG1 and NOTCH2 transcripts. Inhibits regulatory T-cell (Treg) recruitment by mediating demethylation and destabilization of CCL28 mRNAs. In Rattus norvegicus (Rat), this protein is RNA demethylase ALKBH5 (Alkbh5).